The chain runs to 591 residues: MRSHYCGDVNKSHVGQEVTLVGWVNRSRDLGGVVFLDLRDREGLVQVVYDPDLPEVFNVASTLRAEFCVQVKGVVRARPDSQVNAQMKTGEIEVLGKELTIINSSEPLPLSLDNYQNNSEEQRLKYRYLDLRRPEMAQRLMFRAKVTSAVRRFLDSNGFLDIETPILTKATPEGARDYLVPSRTYKGQFFALPQSPQLFKQLLMMSGFDRYYQIVKCFRDEDLRADRQPEFTQIDIETSFMTSEQVMAKTEEMMRGLFLEMLNVDLGEFPRMTYNEAMRRFGSDKPDLRNPLELVDVADLLKEVEFAVFSGPANDEEGRVAALRIPGGASLSRKQIDDYTKFVGIYGAKGLAWMKLNDLTQGLEGIQSPVLKFLNEGIVNEIISRTGAQTGDIILFGADNATVVAESMGALRLKAGEDFNLLEGQWRPLWVVDFPMFEKINGSFHAVHHPFTAPRGVTPQELEANPANRVSDAYDMVLNGCELGGGSVRIHNQEMQSAVFRILGITDEEAKEKFGFLLEALRYGTPPHAGLAFGLDRIIMLMTGASSIRDVMAFPKTTTAACPLTNAPGFANPQQLAELGISVVKAAKTED.

L-aspartate is bound at residue glutamate 173. Positions glutamine 197–lysine 200 are aspartate. Arginine 219 contributes to the L-aspartate binding site. ATP contacts are provided by residues arginine 219 to glutamate 221 and glutamine 228. Position 448 (histidine 448) interacts with L-aspartate. Glutamate 482 is a binding site for ATP. Arginine 489 serves as a coordination point for L-aspartate. Glycine 534–arginine 537 contacts ATP.

The protein belongs to the class-II aminoacyl-tRNA synthetase family. Type 1 subfamily. As to quaternary structure, homodimer.

The protein resides in the cytoplasm. The catalysed reaction is tRNA(Asp) + L-aspartate + ATP = L-aspartyl-tRNA(Asp) + AMP + diphosphate. Its function is as follows. Catalyzes the attachment of L-aspartate to tRNA(Asp) in a two-step reaction: L-aspartate is first activated by ATP to form Asp-AMP and then transferred to the acceptor end of tRNA(Asp). In Shewanella sp. (strain ANA-3), this protein is Aspartate--tRNA ligase.